A 636-amino-acid polypeptide reads, in one-letter code: ATP-dependent zinc metalloprotease FtsH 1 (636 aa).

At 1-18 the chain is on the cytoplasmic side; sequence MKLSPPKKNLPPQKNNEP. The chain crosses the membrane as a helical span at residues 19 to 39; the sequence is PFPYLRLLVQVGIALFLVWIW. At 40 to 126 the chain is on the periplasmic side; the sequence is QESLHKATVS…YGSVKPSLLS (87 aa). Residues 127–147 form a helical membrane-spanning segment; the sequence is QILFSWVVPILIFFLVWFALA. Over 148 to 636 the chain is Cytoplasmic; sequence RFMGGGGAGY…KEAPSYSSTL (489 aa). ATP is bound at residue 220 to 227; the sequence is GPPGTGKT. H442 contributes to the Zn(2+) binding site. Residue E443 is part of the active site. Residues H446 and D519 each contribute to the Zn(2+) site.

The protein in the central section; belongs to the AAA ATPase family. In the C-terminal section; belongs to the peptidase M41 family. In terms of assembly, homohexamer. Zn(2+) serves as cofactor.

Its subcellular location is the cell inner membrane. Functionally, acts as a processive, ATP-dependent zinc metallopeptidase for both cytoplasmic and membrane proteins. Plays a role in the quality control of integral membrane proteins. The polypeptide is ATP-dependent zinc metalloprotease FtsH 1 (Methylacidiphilum infernorum (isolate V4) (Methylokorus infernorum (strain V4))).